A 400-amino-acid polypeptide reads, in one-letter code: MTQYSSLLRGLAAGSAFLFLFAPTAFAAEQTVEAPSVDARAWILMDYASGKVLAEGNADEKLDPASLTKIMTSYVVGQALKADKIKLTDMVTVGKDAWATGNPALRGSSVMFLKPGDQVSVADLNKGVIIQSGNDACIALADYVAGSQESFIGLMNGYAKKLGLTNTTFQTVHGLDAPGQFSTARDMALLGKALIHDVPEEYAIHKEKEFTFNKIRQPNRNRLLWSSNLNVDGMKTGTTAGAGYNLVASATQGDMRLISVVLGAKTDRIRFNESEKLLTWGFRFFETVTPIKPDATFVTQRVWFGDKSEVNLGAGEAGSVTIPRGQLKNLKASYTLTEPQLTAPLKKGQVVGTIDFQLNGKSIEQRPLIVMENVEEGGFFGRVWDFVMMKFHQWFGSWFS.

A signal peptide spans 1 to 27 (MTQYSSLLRGLAAGSAFLFLFAPTAFA). Ser-66 (acyl-ester intermediate) is an active-site residue. Lys-69 functions as the Proton acceptor in the catalytic mechanism. Ser-132 is a catalytic residue. Residue Lys-235 coordinates substrate. Residues 383 to 400 (VWDFVMMKFHQWFGSWFS) are required for inner membrane binding.

Belongs to the peptidase S11 family.

It localises to the cell inner membrane. The enzyme catalyses Preferential cleavage: (Ac)2-L-Lys-D-Ala-|-D-Ala. Also transpeptidation of peptidyl-alanyl moieties that are N-acyl substituents of D-alanine.. The protein operates within cell wall biogenesis; peptidoglycan biosynthesis. Functionally, removes C-terminal D-alanyl residues from sugar-peptide cell wall precursors. The polypeptide is D-alanyl-D-alanine carboxypeptidase DacC (dacC) (Escherichia coli (strain K12)).